We begin with the raw amino-acid sequence, 262 residues long: Putative glycyl-radical enzyme activating enzyme HI_0520 (262 aa).

Residues 20–262 (VEGQGNRSSI…CGINKILTIL (243 aa)) enclose the Radical SAM core domain. Residues Cys34, Cys38, and Cys41 each contribute to the [4Fe-4S] cluster site. Residues 40-42 (YCH), Gly81, and 130-132 (DLK) each bind S-adenosyl-L-methionine.

This sequence belongs to the organic radical-activating enzymes family. Requires [4Fe-4S] cluster as cofactor.

The enzyme catalyses glycyl-[protein] + reduced [flavodoxin] + S-adenosyl-L-methionine = glycin-2-yl radical-[protein] + semiquinone [flavodoxin] + 5'-deoxyadenosine + L-methionine + H(+). In Haemophilus influenzae (strain ATCC 51907 / DSM 11121 / KW20 / Rd), this protein is Putative glycyl-radical enzyme activating enzyme HI_0520.